We begin with the raw amino-acid sequence, 246 residues long: tRNA1(Val) (adenine(37)-N6)-methyltransferase (246 aa).

Belongs to the methyltransferase superfamily. tRNA (adenine-N(6)-)-methyltransferase family.

Its subcellular location is the cytoplasm. It catalyses the reaction adenosine(37) in tRNA1(Val) + S-adenosyl-L-methionine = N(6)-methyladenosine(37) in tRNA1(Val) + S-adenosyl-L-homocysteine + H(+). Its function is as follows. Specifically methylates the adenine in position 37 of tRNA(1)(Val) (anticodon cmo5UAC). The polypeptide is tRNA1(Val) (adenine(37)-N6)-methyltransferase (Shewanella halifaxensis (strain HAW-EB4)).